A 359-amino-acid chain; its full sequence is Peptide chain release factor 1 (359 aa).

Gln-234 is modified (N5-methylglutamine).

Belongs to the prokaryotic/mitochondrial release factor family. In terms of processing, methylated by PrmC. Methylation increases the termination efficiency of RF1.

The protein localises to the cytoplasm. Its function is as follows. Peptide chain release factor 1 directs the termination of translation in response to the peptide chain termination codons UAG and UAA. This is Peptide chain release factor 1 from Clavibacter michiganensis subsp. michiganensis (strain NCPPB 382).